The chain runs to 313 residues: Ribosomal RNA small subunit methyltransferase H (313 aa).

S-adenosyl-L-methionine-binding positions include 35-37 (GGH), aspartate 55, phenylalanine 81, aspartate 103, and glutamine 110.

The protein belongs to the methyltransferase superfamily. RsmH family.

It is found in the cytoplasm. It catalyses the reaction cytidine(1402) in 16S rRNA + S-adenosyl-L-methionine = N(4)-methylcytidine(1402) in 16S rRNA + S-adenosyl-L-homocysteine + H(+). Its function is as follows. Specifically methylates the N4 position of cytidine in position 1402 (C1402) of 16S rRNA. This Pseudomonas aeruginosa (strain ATCC 15692 / DSM 22644 / CIP 104116 / JCM 14847 / LMG 12228 / 1C / PRS 101 / PAO1) protein is Ribosomal RNA small subunit methyltransferase H.